The following is a 171-amino-acid chain: Large ribosomal subunit protein uL10 (171 aa).

It belongs to the universal ribosomal protein uL10 family. Part of the ribosomal stalk of the 50S ribosomal subunit. The N-terminus interacts with L11 and the large rRNA to form the base of the stalk. The C-terminus forms an elongated spine to which L12 dimers bind in a sequential fashion forming a multimeric L10(L12)X complex.

Its function is as follows. Forms part of the ribosomal stalk, playing a central role in the interaction of the ribosome with GTP-bound translation factors. The sequence is that of Large ribosomal subunit protein uL10 from Rhizorhabdus wittichii (strain DSM 6014 / CCUG 31198 / JCM 15750 / NBRC 105917 / EY 4224 / RW1) (Sphingomonas wittichii).